Here is a 75-residue protein sequence, read N- to C-terminus: uncharacterized protein (75 aa).

This is an uncharacterized protein from Dryophytes versicolor (chameleon treefrog).